Consider the following 142-residue polypeptide: MSESLVVCDVAEDLVEKLRKFRFRKETNNAAIIMKIDKDKRLVVLDEELEGISPDELKDELPERQPRFIVYSYKYQHDDGRVSYPLCFIFSSPVGCKPEQQMMYAGSKNKLVQTAELTKVFEIRNTEDLTEEWLREKLGFFH.

S2 is subject to N-acetylserine. The ADF-H domain maps to 4–139 (SLVVCDVAED…TEEWLREKLG (136 aa)).

This sequence belongs to the actin-binding proteins ADF family. GMF subfamily. Post-translationally, phosphorylated; stimulated by phorbol ester.

Its function is as follows. This protein causes differentiation of brain cells, stimulation of neural regeneration, and inhibition of proliferation of tumor cells. This is Glia maturation factor beta (GMFB) from Homo sapiens (Human).